The sequence spans 171 residues: Protein phosphatase 1 regulatory subunit 1A (171 aa).

M1 carries the N-acetylmethionine modification. The disordered stretch occupies residues 1 to 171 (MEQDNSPRKI…PLDSKGANSV (171 aa)). An essential for activity region spans residues 9 to 12 (KIQF). Positions 19 to 29 (PHLDPEAAEQI) are enriched in basic and acidic residues. A Phosphothreonine; by PKA modification is found at T35. Positions 42-54 (TSDQSSPEIDEDR) are essential for activity. Residues S43, S46, S47, and S67 each carry the phosphoserine modification. The span at 135 to 157 (KTAECIPKTHERGSKEPSTKEPS) shows a compositional bias: basic and acidic residues. Residues 143 to 171 (THERGSKEPSTKEPSTHIPPLDSKGANSV) form an interaction with PPP1R15A region.

It belongs to the protein phosphatase inhibitor 1 family. Interacts with PPP1R15A. In terms of processing, phosphorylation of Thr-35 is required for activity.

In terms of biological role, inhibitor of protein-phosphatase 1. This protein may be important in hormonal control of glycogen metabolism. Hormones that elevate intracellular cAMP increase I-1 activity in many tissues. I-1 activation may impose cAMP control over proteins that are not directly phosphorylated by PKA. Following a rise in intracellular calcium, I-1 is inactivated by calcineurin (or PP2B). Does not inhibit type-2 phosphatases. This Homo sapiens (Human) protein is Protein phosphatase 1 regulatory subunit 1A (PPP1R1A).